The sequence spans 334 residues: MTIIVTGAAGFIGSNIVKALNQRGITDIVAVDNLSKGEKFKNLAECEIAHYLDKHEFIRQVREHILPYQNIEAVFHQGACSDTMNHDGLYMMDNNYQYTLDLLDWCQDERIPFLYASSAAVYGKGEIFREERELEKPLNVYGYSKFLFDQVLRRRMKEGLTAQVVGFRYFNVYGQHEQHKGRMASVAFHHFHQYREHGYVNLFGSNDGYGNGEQTRDFVSVEDVAKVNLYFFDHPELSGIYNLGTGRSQQFNELAAATVNACRAAEGKPEMSLKELVEEELIRYIPFPDALKGKYQSFTQADITKLREAGYTEEFFDVKSGVERYVKWMLENLA.

Residues 11–12 (FI), 32–33 (DN), Lys-39, Lys-54, 77–81 (QGACS), and Asn-94 each bind NADP(+). Tyr-141 serves as the catalytic Proton acceptor. Lys-145 is a binding site for NADP(+). Asn-171 is a substrate binding site. 2 residues coordinate NADP(+): Val-172 and Lys-180. Lys-180 serves as the catalytic Proton acceptor. Substrate contacts are provided by residues Arg-182, His-189, 203–206 (FGSN), Arg-216, and Tyr-295.

The protein belongs to the NAD(P)-dependent epimerase/dehydratase family. HldD subfamily. In terms of assembly, homopentamer. NADP(+) is required as a cofactor.

The enzyme catalyses ADP-D-glycero-beta-D-manno-heptose = ADP-L-glycero-beta-D-manno-heptose. Its pathway is nucleotide-sugar biosynthesis; ADP-L-glycero-beta-D-manno-heptose biosynthesis; ADP-L-glycero-beta-D-manno-heptose from D-glycero-beta-D-manno-heptose 7-phosphate: step 4/4. Catalyzes the interconversion between ADP-D-glycero-beta-D-manno-heptose and ADP-L-glycero-beta-D-manno-heptose via an epimerization at carbon 6 of the heptose. The sequence is that of ADP-L-glycero-D-manno-heptose-6-epimerase from Neisseria meningitidis serogroup C (strain 053442).